Here is a 231-residue protein sequence, read N- to C-terminus: Acyl-protein thioesterase 2 (231 aa).

Cysteine 2 carries S-palmitoyl cysteine lipidation. Serine 82 is modified (phosphoserine). Residues serine 122, aspartate 176, and histidine 210 each act as charge relay system in the active site.

Belongs to the AB hydrolase superfamily. AB hydrolase 2 family. As to expression, ubiquitous; detected at low levels.

The protein localises to the cytoplasm. The enzyme catalyses S-hexadecanoyl-L-cysteinyl-[protein] + H2O = L-cysteinyl-[protein] + hexadecanoate + H(+). The catalysed reaction is prostaglandin E2 1-glyceryl ester + H2O = prostaglandin E2 + glycerol + H(+). It catalyses the reaction 1-hexadecanoyl-sn-glycero-3-phosphocholine + H2O = sn-glycerol 3-phosphocholine + hexadecanoate + H(+). It carries out the reaction 1-octadecanoyl-sn-glycero-3-phosphocholine + H2O = octadecanoate + sn-glycerol 3-phosphocholine + H(+). The enzyme catalyses 1-hexadecanoyl-sn-glycero-3-phosphate + H2O = sn-glycerol 3-phosphate + hexadecanoate + H(+). The catalysed reaction is 1-hexadecanoyl-sn-glycero-3-phospho-L-serine + H2O = sn-glycero-3-phospho-L-serine + hexadecanoate + H(+). Acts as an acyl-protein thioesterase hydrolyzing fatty acids from S-acylated cysteine residues in proteins such as trimeric G alpha proteins, GSDMD, GAP43, ZDHHC6 or HRAS. Deacylates GAP43. Mediates depalmitoylation of ZDHHC6. Has lysophospholipase activity. Hydrolyzes prostaglandin glycerol esters (PG-Gs). Hydrolyzes PG-Gs in the following order prostaglandin D2-glycerol ester (PGD2-G) &gt; prostaglandin E2 glycerol ester (PGE2-G) &gt; prostaglandin F2-alpha-glycerol ester (PGF2-alpha-G). Hydrolyzes 1-arachidonoylglycerol but not 2-arachidonoylglycerol or arachidonoylethanolamide. The chain is Acyl-protein thioesterase 2 (Lypla2) from Mus musculus (Mouse).